The primary structure comprises 812 residues: Valine--tRNA ligase (812 aa).

Positions 46–56 match the 'HIGH' region motif; the sequence is PTVSGQLHIGH. Residues 536-540 carry the 'KMSKS' region motif; that stretch reads KMSKS. Lysine 539 is a binding site for ATP.

Belongs to the class-I aminoacyl-tRNA synthetase family. ValS type 2 subfamily. As to quaternary structure, monomer.

It localises to the cytoplasm. The enzyme catalyses tRNA(Val) + L-valine + ATP = L-valyl-tRNA(Val) + AMP + diphosphate. Its function is as follows. Catalyzes the attachment of valine to tRNA(Val). As ValRS can inadvertently accommodate and process structurally similar amino acids such as threonine, to avoid such errors, it has a 'posttransfer' editing activity that hydrolyzes mischarged Thr-tRNA(Val) in a tRNA-dependent manner. The chain is Valine--tRNA ligase from Rickettsia akari (strain Hartford).